Reading from the N-terminus, the 803-residue chain is Phenylalanine--tRNA ligase beta subunit (803 aa).

In terms of domain architecture, tRNA-binding spans serine 40–tyrosine 150. Residues proline 405–lysine 480 form the B5 domain. Residues aspartate 458 and glutamate 468 each coordinate Mg(2+). An FDX-ACB domain is found at serine 710–arginine 803.

The protein belongs to the phenylalanyl-tRNA synthetase beta subunit family. Type 1 subfamily. As to quaternary structure, tetramer of two alpha and two beta subunits. Requires Mg(2+) as cofactor.

It is found in the cytoplasm. The enzyme catalyses tRNA(Phe) + L-phenylalanine + ATP = L-phenylalanyl-tRNA(Phe) + AMP + diphosphate + H(+). The chain is Phenylalanine--tRNA ligase beta subunit from Blochmanniella floridana.